The primary structure comprises 1343 residues: Protein cordon-bleu (1343 aa).

6 disordered regions span residues 1-51 (MNLG…GDCK), 301-479 (KVEL…PAAE), 522-613 (VSVA…NGYE), 733-808 (IDKP…TRVL), 1056-1077 (EKPT…KSLD), and 1105-1148 (INNF…NVFG). Residues 20-30 (APPPPRPPQPA) are compositionally biased toward pro residues. Positions 305–310 (KKRRAP) match the KKRRAP 1 motif. The segment covering 324–335 (SQISLGSPSSHN) has biased composition (polar residues). The KKRRAP 2 signature appears at 338–343 (KKRKAP). Residues 343–354 (PAPPPTPPPSTP) are compositionally biased toward pro residues. Positions 390 to 400 (DLSHSIEDSEP) are enriched in basic and acidic residues. The span at 406 to 422 (SSSSGDDAAAVGSSSSS) shows a compositional bias: low complexity. The span at 445 to 460 (PEPKPEYEPELKKEAS) shows a compositional bias: basic and acidic residues. Residues 552–573 (ERMQSVSPMDIMSLNSDSTLPV) are compositionally biased toward polar residues. The span at 746-757 (PSQDAKITDNME) shows a compositional bias: basic and acidic residues. The segment covering 773–789 (VELTSQKDTVLQKSQSF) has biased composition (polar residues). Polar residues predominate over residues 1105-1122 (INNFPDTSSARQTPTDTT). A compositionally biased stretch (basic and acidic residues) spans 1128–1137 (KKPELHKSEI). 2 consecutive WH2 domains span residues 1167-1187 (IHSS…LRKV) and 1207-1227 (ERSA…LKKT). The segment at 1246 to 1297 (NVHTEVISPRPTSPDFVPPLPPSFSPPPPPPPPLAPAKPPVVLPPGGNPEAA) is disordered. Pro residues predominate over residues 1261 to 1292 (FVPPLPPSFSPPPPPPPPLAPAKPPVVLPPGG). In terms of domain architecture, WH2 3 spans 1297 to 1317 (AREALLEAIRSGSGAQQLRKV).

In terms of assembly, interacts with pacsin1.

The protein resides in the cell membrane. The protein localises to the cytoplasm. It localises to the cytoskeleton. It is found in the cell projection. Its subcellular location is the ruffle. The protein resides in the cytosol. Its function is as follows. Plays an important role in the reorganization of the actin cytoskeleton. Binds to and sequesters actin monomers (G actin). Nucleates actin polymerization by assembling three actin monomers in cross-filament orientation and thereby promotes growth of actin filaments at the barbed end. Can also mediate actin depolymerization at barbed ends and severing of actin filaments. Promotes formation of cell ruffles. Regulates neuron morphogenesis and increases branching of axons and dendrites. Required for normal embryonic development, including normal development of laterality, normal body size and shape, as well as normal brain, heart and kidney development. Required for normal development of stereocilia and kinocilia in sensory hair cells of neuromasts in the posterior lateral line organ, and thus also for balance keeping and normal swimming behavior. This chain is Protein cordon-bleu (cobl), found in Danio rerio (Zebrafish).